A 180-amino-acid polypeptide reads, in one-letter code: FMN reductase (NADH) RutF (180 aa).

The protein belongs to the non-flavoprotein flavin reductase family. RutF subfamily.

It carries out the reaction FMNH2 + NAD(+) = FMN + NADH + 2 H(+). Functionally, catalyzes the reduction of FMN to FMNH2 which is used to reduce pyrimidine by RutA via the Rut pathway. This chain is FMN reductase (NADH) RutF, found in Variovorax paradoxus (strain S110).